Here is a 295-residue protein sequence, read N- to C-terminus: GATA zinc finger domain-containing protein 23 (295 aa).

The span at 115-126 (ASTSKTATSKNV) shows a compositional bias: low complexity. A disordered region spans residues 115–240 (ASTSKTATSK…KRGRPSKIQP (126 aa)). The segment covering 127–145 (ISNIENNTNKSQPLESNDL) has biased composition (polar residues). Low complexity predominate over residues 146-163 (TPPSSKSSNSSPSTSPSK). Positions 164–174 (RVSKSKTRVTK) are enriched in basic residues. The segment covering 181–227 (STSSSGETENLTTTSTADTTATTDTADTTDGTNTRTSNTSSDDTTTE) has biased composition (low complexity). The segment at residues 229–241 (TKKRGRPSKIQPD) is a DNA-binding region (a.T hook). The segment at 243–270 (CYVCRRTFTSYWRKGIFNDQNEDLCNPC) adopts a GATA-type zinc-finger fold.

This chain is GATA zinc finger domain-containing protein 23 (gtaW), found in Dictyostelium discoideum (Social amoeba).